The sequence spans 122 residues: Small ribosomal subunit protein uS13 (122 aa).

The segment at 99 to 122 (RGQRTHTNARTRKGPAKAIAGKKK) is disordered.

This sequence belongs to the universal ribosomal protein uS13 family. In terms of assembly, part of the 30S ribosomal subunit. Forms a loose heterodimer with protein S19. Forms two bridges to the 50S subunit in the 70S ribosome.

In terms of biological role, located at the top of the head of the 30S subunit, it contacts several helices of the 16S rRNA. In the 70S ribosome it contacts the 23S rRNA (bridge B1a) and protein L5 of the 50S subunit (bridge B1b), connecting the 2 subunits; these bridges are implicated in subunit movement. Contacts the tRNAs in the A and P-sites. The sequence is that of Small ribosomal subunit protein uS13 from Cereibacter sphaeroides (strain ATCC 17025 / ATH 2.4.3) (Rhodobacter sphaeroides).